We begin with the raw amino-acid sequence, 350 residues long: Ion-translocating oxidoreductase complex subunit D (350 aa).

The next 5 membrane-spanning stretches (helical) occupy residues 20-40 (IMMLVLIAALPGIATQLWFFG), 42-62 (GTLFQIILAAVSALAAEAAVL), 68-88 (PIAAILKDNSALLTGLLLAVS), 89-109 (IPPLAPWWMVVLGTVFAVIIA), and 123-143 (PAMIGYVVLLISFPVQMTSWL). Thr-187 is subject to FMN phosphoryl threonine. 5 helical membrane-spanning segments follow: residues 215-235 (LAGAGWQWVNIAWLIGGVWLL), 244-264 (IPVSFLVTLAVCSTLGWAFAG), 267-287 (LASPQLHLLSGATMLGAFFIL), 301-321 (LIFGALAGLLVWLIRSFGGYP), and 322-342 (DGVAFAVLLANITVPLIDYYT).

Belongs to the NqrB/RnfD family. In terms of assembly, the complex is composed of six subunits: RnfA, RnfB, RnfC, RnfD, RnfE and RnfG. FMN is required as a cofactor.

It is found in the cell inner membrane. In terms of biological role, part of a membrane-bound complex that couples electron transfer with translocation of ions across the membrane. In Citrobacter koseri (strain ATCC BAA-895 / CDC 4225-83 / SGSC4696), this protein is Ion-translocating oxidoreductase complex subunit D.